A 566-amino-acid chain; its full sequence is Oxygen-dependent choline dehydrogenase (566 aa).

Aspartate 7 to glutamate 36 is an FAD binding site. Residues glutamine 183–threonine 203 form a disordered region. Residue histidine 474 is the Proton acceptor of the active site.

This sequence belongs to the GMC oxidoreductase family. It depends on FAD as a cofactor.

It catalyses the reaction choline + A = betaine aldehyde + AH2. The catalysed reaction is betaine aldehyde + NAD(+) + H2O = glycine betaine + NADH + 2 H(+). It functions in the pathway amine and polyamine biosynthesis; betaine biosynthesis via choline pathway; betaine aldehyde from choline (cytochrome c reductase route): step 1/1. Functionally, involved in the biosynthesis of the osmoprotectant glycine betaine. Catalyzes the oxidation of choline to betaine aldehyde and betaine aldehyde to glycine betaine at the same rate. This chain is Oxygen-dependent choline dehydrogenase, found in Burkholderia ambifaria (strain ATCC BAA-244 / DSM 16087 / CCUG 44356 / LMG 19182 / AMMD) (Burkholderia cepacia (strain AMMD)).